Reading from the N-terminus, the 397-residue chain is Cell division protein DivIB (397 aa).

Over 1–138 the chain is Cytoplasmic; it reads MTTKDKGDQK…RIERIHLYRA (138 aa). The span at 24 to 37 shows a compositional bias: basic and acidic residues; it reads QEYLEKKSQEKASE. Residues 24–115 form a disordered region; that stretch reads QEYLEKKSQE…DRTEKFIGQA (92 aa). Residues 74 to 103 show a composition bias toward acidic residues; the sequence is ASDDDETNESEESEDVEEPEEENIEESSDV. The helical transmembrane segment at 139–159 threads the bilayer; sequence LPVLVISSLLILLSLYFITPL. The 72-residue stretch at 160 to 231 folds into the POTRA domain; the sequence is GSLKNLVVTG…ITFKIQVTEY (72 aa). Residues 160 to 397 are Extracellular-facing; sequence GSLKNLVVTG…PSDVTDETNN (238 aa). Residues 360 to 397 form a disordered region; that stretch reads LVQKEEQDQEQEKEESSEETVPGETEAAPSDVTDETNN. Positions 366 to 377 are enriched in acidic residues; it reads QDQEQEKEESSE.

This sequence belongs to the FtsQ/DivIB family. DivIB subfamily.

Its subcellular location is the cell membrane. In terms of biological role, cell division protein that may be involved in stabilizing or promoting the assembly of the division complex. The chain is Cell division protein DivIB from Streptococcus gordonii (strain Challis / ATCC 35105 / BCRC 15272 / CH1 / DL1 / V288).